The chain runs to 241 residues: Uridylate kinase (241 aa).

An ATP-binding site is contributed by 9–10 (GS). A UMP-binding site is contributed by glycine 44. ATP-binding residues include glycine 45 and arginine 49. Residues aspartate 66 and 114–120 (IMPGQTT) contribute to the UMP site. ATP-binding residues include threonine 140, tyrosine 146, and aspartate 149.

Belongs to the UMP kinase family. As to quaternary structure, homohexamer.

The protein localises to the cytoplasm. The catalysed reaction is UMP + ATP = UDP + ADP. It functions in the pathway pyrimidine metabolism; CTP biosynthesis via de novo pathway; UDP from UMP (UMPK route): step 1/1. Its activity is regulated as follows. Inhibited by UTP. In terms of biological role, catalyzes the reversible phosphorylation of UMP to UDP. The polypeptide is Uridylate kinase (Haloquadratum walsbyi (strain DSM 16790 / HBSQ001)).